The sequence spans 82 residues: RNA-binding protein Hfq (82 aa).

The 61-residue stretch at 10 to 70 (DLFLNTVRKS…ISTIMPSQPV (61 aa)) folds into the Sm domain.

It belongs to the Hfq family. In terms of assembly, homohexamer.

In terms of biological role, RNA chaperone that binds small regulatory RNA (sRNAs) and mRNAs to facilitate mRNA translational regulation in response to envelope stress, environmental stress and changes in metabolite concentrations. Also binds with high specificity to tRNAs. The sequence is that of RNA-binding protein Hfq from Chelativorans sp. (strain BNC1).